Consider the following 282-residue polypeptide: ATP phosphoribosyltransferase (282 aa).

This sequence belongs to the ATP phosphoribosyltransferase family. Long subfamily. Requires Mg(2+) as cofactor.

The protein resides in the cytoplasm. It catalyses the reaction 1-(5-phospho-beta-D-ribosyl)-ATP + diphosphate = 5-phospho-alpha-D-ribose 1-diphosphate + ATP. Its pathway is amino-acid biosynthesis; L-histidine biosynthesis; L-histidine from 5-phospho-alpha-D-ribose 1-diphosphate: step 1/9. With respect to regulation, feedback inhibited by histidine. Its function is as follows. Catalyzes the condensation of ATP and 5-phosphoribose 1-diphosphate to form N'-(5'-phosphoribosyl)-ATP (PR-ATP). Has a crucial role in the pathway because the rate of histidine biosynthesis seems to be controlled primarily by regulation of HisG enzymatic activity. This chain is ATP phosphoribosyltransferase, found in Pyrobaculum calidifontis (strain DSM 21063 / JCM 11548 / VA1).